Here is a 445-residue protein sequence, read N- to C-terminus: Tubulin beta-2B chain (445 aa).

The MREI motif motif lies at 1-4; sequence MREI. Glutamine 11 is a GTP binding site. A Phosphoserine modification is found at serine 40. Threonine 55 carries the post-translational modification Phosphothreonine. Lysine 58 is modified (N6-acetyllysine; alternate). Position 58 is an N6-succinyllysine; alternate (lysine 58). Residue lysine 58 forms a Glycyl lysine isopeptide (Lys-Gly) (interchain with G-Cter in ubiquitin); alternate linkage. GTP-binding residues include glutamate 69, serine 138, glycine 142, threonine 143, and glycine 144. Glutamate 69 provides a ligand contact to Mg(2+). Serine 172 is modified (phosphoserine; by CDK1). GTP is bound by residues asparagine 204 and asparagine 226. A phosphothreonine mark is found at threonine 285 and threonine 290. Arginine 318 carries the post-translational modification Omega-N-methylarginine. A Glycyl lysine isopeptide (Lys-Gly) (interchain with G-Cter in ubiquitin) cross-link involves residue lysine 324. A disordered region spans residues 422–445; it reads YQQYQDATADEQGEFEEEEGEDEA. Residues 429–445 are compositionally biased toward acidic residues; it reads TADEQGEFEEEEGEDEA. Glutamate 438 carries the 5-glutamyl polyglutamate modification.

The protein belongs to the tubulin family. In terms of assembly, dimer of alpha and beta chains. A typical microtubule is a hollow water-filled tube with an outer diameter of 25 nm and an inner diameter of 15 nM. Alpha-beta heterodimers associate head-to-tail to form protofilaments running lengthwise along the microtubule wall with the beta-tubulin subunit facing the microtubule plus end conferring a structural polarity. Microtubules usually have 13 protofilaments but different protofilament numbers can be found in some organisms and specialized cells. The cofactor is Mg(2+). Some glutamate residues at the C-terminus are polyglycylated, resulting in polyglycine chains on the gamma-carboxyl group. Glycylation is mainly limited to tubulin incorporated into axonemes (cilia and flagella) whereas glutamylation is prevalent in neuronal cells, centrioles, axonemes, and the mitotic spindle. Both modifications can coexist on the same protein on adjacent residues, and lowering polyglycylation levels increases polyglutamylation, and reciprocally. The precise function of polyglycylation is still unclear. Post-translationally, some glutamate residues at the C-terminus are polyglutamylated, resulting in polyglutamate chains on the gamma-carboxyl group. Polyglutamylation plays a key role in microtubule severing by spastin (SPAST). SPAST preferentially recognizes and acts on microtubules decorated with short polyglutamate tails: severing activity by SPAST increases as the number of glutamates per tubulin rises from one to eight, but decreases beyond this glutamylation threshold. In terms of processing, phosphorylated on Ser-172 by CDK1 during the cell cycle, from metaphase to telophase, but not in interphase. This phosphorylation inhibits tubulin incorporation into microtubules.

The protein resides in the cytoplasm. It localises to the cytoskeleton. Its function is as follows. Tubulin is the major constituent of microtubules, a cylinder consisting of laterally associated linear protofilaments composed of alpha- and beta-tubulin heterodimers. Microtubules grow by the addition of GTP-tubulin dimers to the microtubule end, where a stabilizing cap forms. Below the cap, tubulin dimers are in GDP-bound state, owing to GTPase activity of alpha-tubulin. Implicated in neuronal migration. The sequence is that of Tubulin beta-2B chain (TUBB2B) from Bos taurus (Bovine).